The sequence spans 1898 residues: Receptor-type tyrosine-protein phosphatase F (1898 aa).

The first 29 residues, 1–29, serve as a signal peptide directing secretion; it reads MAPEPAPGRRMVPLVPALVMLGLMAGAHG. Topologically, residues 30–1254 are extracellular; the sequence is DSKPVFVKVP…QQQEEPEMLW (1225 aa). 3 Ig-like C2-type domains span residues 33 to 123, 135 to 224, and 232 to 314; these read PVFV…AKLS, PTID…ANLY, and PRFS…AQVT. Cys-54 and Cys-107 form a disulfide bridge. 68–77 is a binding site for heparin; sequence KKGKKVSSQR. N-linked (GlcNAc...) asparagine glycosylation is present at Asn-117. The cysteines at positions 156 and 207 are disulfide-linked. Residues Asn-250 and Asn-295 are each glycosylated (N-linked (GlcNAc...) asparagine). Residues Cys-253 and Cys-298 are joined by a disulfide bond. Fibronectin type-III domains lie at 321–411, 416–510, 514–604, 609–706, 711–810, 811–904, 909–1001, and 1005–1089; these read PPID…TGEQ, PPRR…TQQG, QPAD…TAQS, PPQK…TDED, PPRK…TTGA, VPGR…TPED, FPQN…TMPV, and FAKN…TAPD. Positions 693-712 are disordered; that stretch reads GPESSPVLVRTDEDVPSGPP. Asn-721 carries an N-linked (GlcNAc...) asparagine glycan. N-linked (GlcNAc...) asparagine glycans are attached at residues Asn-941, Asn-957, and Asn-960. Residues 1255–1275 form a helical membrane-spanning segment; sequence VTGPVLAVILIILIVIAILLF. The Cytoplasmic segment spans residues 1276 to 1898; sequence KRKRTHSPSS…YLGSFDHYAT (623 aa). A Phosphoserine modification is found at Ser-1296. 2 Tyrosine-protein phosphatase domains span residues 1343 to 1598 and 1630 to 1889; these read FSQE…LLEA and MELE…ALEY. Residues Asp-1507, 1539–1545, and Gln-1583 each bind substrate; that span reads CSAGVGR. Cys-1539 (phosphocysteine intermediate) is an active-site residue. Cys-1830 serves as the catalytic Phosphocysteine intermediate.

This sequence belongs to the protein-tyrosine phosphatase family. Receptor class 2A subfamily. Interacts with GRIP1. Interacts with PPFIA1, PPFIA2 and PPFIA3. Interacts with PTPRF. As to expression, expressed in the cell of the T lineage but not in cells of any other hemopoietic lineage.

It is found in the membrane. It carries out the reaction O-phospho-L-tyrosyl-[protein] + H2O = L-tyrosyl-[protein] + phosphate. Functionally, possible cell adhesion receptor. It possesses an intrinsic protein tyrosine phosphatase activity (PTPase) and dephosphorylates EPHA2 regulating its activity. This Mus musculus (Mouse) protein is Receptor-type tyrosine-protein phosphatase F (Ptprf).